The primary structure comprises 243 residues: Type III pantothenate kinase (243 aa).

Residue 6 to 13 (DIGNTVAK) coordinates ATP. Residues Tyr86 and 93–96 (GYDR) each bind substrate. Residue Asp95 is the Proton acceptor of the active site. Asp116 is a K(+) binding site. Thr119 is a binding site for ATP. Thr171 contributes to the substrate binding site.

This sequence belongs to the type III pantothenate kinase family. As to quaternary structure, homodimer. NH4(+) is required as a cofactor. Requires K(+) as cofactor.

The protein localises to the cytoplasm. It carries out the reaction (R)-pantothenate + ATP = (R)-4'-phosphopantothenate + ADP + H(+). It participates in cofactor biosynthesis; coenzyme A biosynthesis; CoA from (R)-pantothenate: step 1/5. In terms of biological role, catalyzes the phosphorylation of pantothenate (Pan), the first step in CoA biosynthesis. The protein is Type III pantothenate kinase of Bacteroides fragilis (strain YCH46).